Reading from the N-terminus, the 180-residue chain is CASP-like protein 2D1 (180 aa).

The Cytoplasmic portion of the chain corresponds to 1-7 (MAASGLK). Residues 8 to 28 (VPEMALRVCVVPLALASLWEM) traverse the membrane as a helical segment. Topologically, residues 29–48 (ATNAQADDTYGEVKFSDLSG) are extracellular. The chain crosses the membrane as a helical span at residues 49 to 69 (FSYLVGVNAVTAAYALVSILL). Residues 70–79 (SSLKPLARYD) are Cytoplasmic-facing. A helical membrane pass occupies residues 80–100 (WVILVMDQASAYLLVTSASAA). Over 101–129 (AELLQLARRGDREVSWGEVCSYFGRFCGK) the chain is Extracellular. Residues 130-150 (ATVSLALHAAALACFVALALV) traverse the membrane as a helical segment. Residues 151-180 (SAFRVLSTTGSSCHPPKHAQAQEHEQGRYN) are Cytoplasmic-facing. A disordered region spans residues 161 to 180 (SSCHPPKHAQAQEHEQGRYN). Residues 170–180 (QAQEHEQGRYN) show a composition bias toward basic and acidic residues.

The protein belongs to the Casparian strip membrane proteins (CASP) family. As to quaternary structure, homodimer and heterodimers.

It is found in the cell membrane. The sequence is that of CASP-like protein 2D1 from Sorghum bicolor (Sorghum).